A 709-amino-acid chain; its full sequence is Polyribonucleotide nucleotidyltransferase (709 aa).

The Mg(2+) site is built by Asp-485 and Asp-491. The KH domain maps to 552-611; it reads PRIYTMKIDPKKIKDVIGKGGATIRSLTEETGTSIDIDDDGTVKIAAVDSNAAKNVMGRI. The 69-residue stretch at 621–689 folds into the S1 motif domain; sequence GAIYKGKVTR…RQGRIRLTMK (69 aa).

The protein belongs to the polyribonucleotide nucleotidyltransferase family. Component of the RNA degradosome, which is a multiprotein complex involved in RNA processing and mRNA degradation. The cofactor is Mg(2+).

The protein resides in the cytoplasm. The catalysed reaction is RNA(n+1) + phosphate = RNA(n) + a ribonucleoside 5'-diphosphate. In terms of biological role, involved in mRNA degradation. Catalyzes the phosphorolysis of single-stranded polyribonucleotides processively in the 3'- to 5'-direction. The polypeptide is Polyribonucleotide nucleotidyltransferase (Haemophilus influenzae (strain PittGG)).